The sequence spans 692 residues: Elongation factor G (692 aa).

A tr-type G domain is found at 8 to 282 (ENTRNIGIMA…AVIDYLPSPL (275 aa)). GTP contacts are provided by residues 17 to 24 (AHIDAGKT), 81 to 85 (DTPGH), and 135 to 138 (NKMD).

This sequence belongs to the TRAFAC class translation factor GTPase superfamily. Classic translation factor GTPase family. EF-G/EF-2 subfamily.

It is found in the cytoplasm. Its function is as follows. Catalyzes the GTP-dependent ribosomal translocation step during translation elongation. During this step, the ribosome changes from the pre-translocational (PRE) to the post-translocational (POST) state as the newly formed A-site-bound peptidyl-tRNA and P-site-bound deacylated tRNA move to the P and E sites, respectively. Catalyzes the coordinated movement of the two tRNA molecules, the mRNA and conformational changes in the ribosome. The polypeptide is Elongation factor G (Bacillus cereus (strain AH820)).